We begin with the raw amino-acid sequence, 105 residues long: Early nodulin-93 (105 aa).

A helical transmembrane segment spans residues 66–83 (TAQALIISTATAAAYFIV).

The protein localises to the membrane. This chain is Early nodulin-93, found in Glycine max (Soybean).